We begin with the raw amino-acid sequence, 232 residues long: Protein Mis18-alpha (232 aa).

Ser-36, Ser-39, and Ser-40 each carry phosphoserine. The 99-residue stretch at Pro-79–Leu-177 folds into the Mis18 domain. Zn(2+)-binding residues include Cys-84, Cys-87, Cys-140, and Cys-143. Lys-161 is covalently cross-linked (Glycyl lysine isopeptide (Lys-Gly) (interchain with G-Cter in SUMO2)). Ser-232 carries the phosphoserine modification.

This sequence belongs to the mis18 family. Homodimer, and heterodimer with OIP5/MIS18B. Identified in a complex containing MIS18A, OIP5/MIS18B, MIS18BP1, RBBP7 and RBBP4.

It localises to the nucleus. The protein localises to the chromosome. It is found in the centromere. Functionally, required for recruitment of CENPA to centromeres and normal chromosome segregation during mitosis. The chain is Protein Mis18-alpha (MIS18A) from Otolemur garnettii (Small-eared galago).